Consider the following 297-residue polypeptide: Coiled-coil domain-containing protein 159 (297 aa).

Residues 147–297 (EELELVREEV…SKSGRSFPPA (151 aa)) adopt a coiled-coil conformation. The interval 256–297 (LRGHKGHQCLSPPLPSWDSDSDCDQDLSQPPFSKSGRSFPPA) is disordered.

Interacts with DYNLT2. Interacts with GGNBP1. Interacts with OSBP2.

In terms of biological role, functions during spermatid development; may participate in the centrosome reduction procedure of spermatids and is required for the formation of the connecting piece/sperm head-tail coupling apparatus (HTCA) and the correct and tight attachment of the flagellum to the nuclear envelope. This chain is Coiled-coil domain-containing protein 159 (CCDC159), found in Homo sapiens (Human).